Consider the following 414-residue polypeptide: Serine/threonine transporter SstT (414 aa).

8 consecutive transmembrane segments (helical) span residues 22-42, 54-74, 89-109, 148-168, 189-209, 223-243, 305-325, and 337-357; these read GLVL…TIGF, IFVK…VMAA, IIVL…IAGF, AIFK…GLAL, IVHV…AETL, LLAV…PILV, MAGA…TLGL, and IVAA…LLLI.

Belongs to the dicarboxylate/amino acid:cation symporter (DAACS) (TC 2.A.23) family.

The protein localises to the cell inner membrane. It catalyses the reaction L-serine(in) + Na(+)(in) = L-serine(out) + Na(+)(out). The enzyme catalyses L-threonine(in) + Na(+)(in) = L-threonine(out) + Na(+)(out). Involved in the import of serine and threonine into the cell, with the concomitant import of sodium (symport system). This is Serine/threonine transporter SstT from Haemophilus influenzae (strain 86-028NP).